Here is a 208-residue protein sequence, read N- to C-terminus: Large ribosomal subunit protein uL3 (208 aa).

At Q149 the chain carries N5-methylglutamine.

The protein belongs to the universal ribosomal protein uL3 family. Part of the 50S ribosomal subunit. Forms a cluster with proteins L14 and L19. In terms of processing, methylated by PrmB.

Its function is as follows. One of the primary rRNA binding proteins, it binds directly near the 3'-end of the 23S rRNA, where it nucleates assembly of the 50S subunit. The polypeptide is Large ribosomal subunit protein uL3 (Haemophilus influenzae (strain PittGG)).